The primary structure comprises 208 residues: MADRGLLIVFSGPSGVGKGTVRREIFESSENQFQYSVSMTTRAQRPGEVDGVDYFFRTREEFEELIRQGQMLEYAEYVGNYYGTPLTYVNETLDKGIDVFLEIEVQGALQVKKKVPDAVFIFLTPPDLDELQDRLVGRGTDSAEVIAQRIEKAKEEIALMREYDYAIVNDQVPLAAERVKCVIEAEHFCVDRVIGHYQEMLPKSPTTR.

The Guanylate kinase-like domain occupies 5-184; that stretch reads GLLIVFSGPS…AAERVKCVIE (180 aa). 12 to 19 provides a ligand contact to ATP; sequence GPSGVGKG.

This sequence belongs to the guanylate kinase family.

Its subcellular location is the cytoplasm. It carries out the reaction GMP + ATP = GDP + ADP. Essential for recycling GMP and indirectly, cGMP. This chain is Guanylate kinase, found in Streptococcus pneumoniae serotype 4 (strain ATCC BAA-334 / TIGR4).